The primary structure comprises 333 residues: Photosystem II assembly lipoprotein Ycf48 (333 aa).

Residues 1–23 (MKRLLNSATQLLLVLVLGISLSG) form the signal peptide. Residue cysteine 24 is the site of N-palmitoyl cysteine attachment. Cysteine 24 carries the S-diacylglycerol cysteine lipid modification.

This sequence belongs to the Ycf48 family. As to quaternary structure, part of early PSII assembly complexes which includes D1 (psbA) and PsbI; not found in mature PSII. Binds to the lumenal side of PSII complexes. Interacts with YidC.

It is found in the cellular thylakoid membrane. Its function is as follows. A factor required for optimal assembly of photosystem II (PSII), acting in the early stages of PSII assembly. Also plays a role in replacement of photodamaged D1 (psbA). Assists YidC in synthesis of chlorophyll-binding proteins. In Synechococcus sp. (strain CC9605), this protein is Photosystem II assembly lipoprotein Ycf48.